The sequence spans 449 residues: MSAMIEKVLIANRGEIALRILRACRELGIKTVAVHSEADRDLKHVLLADESVCIGPAPAMQSYLNVPAIISAAEVTDTVAIHPGYGFLSENADFAERVEKSGFIFIGPRPETIRLMGDKVSAIAAMKAAGVPCVPGSDGPIDDNKKRTLELAREIGYPIMIKSSGGGGGRGMRVVHSEATLLNAIALTRAEAAAAFNNDMVYMEKYLENPRHIEFQVLADQMGNAIHLGERDCSMQRRHQKVVEEAPAPGITEEQRREIGERCAAACRSIGYRGAGTFEFLYENGQFYFIEMNTRVQVEHPVTEMVTGVDIVKEQILIAAGEPLRYRQSDIQMRGHAIECRINAEHPETFMPSPGKITDFHAPGGPGVRIETHIYSGYTVPCHYDSMIGKLITHGEDRESAVARMCNALRETVIEGIHSNIKLQRSIMRDGAFLAGGANIHYLEKMLGL.

Positions 4 to 448 (MIEKVLIANR…NIHYLEKMLG (445 aa)) constitute a Biotin carboxylation domain. Residues Lys119, Lys162, 168-169 (GG), 204-207 (EKYL), His212, and His239 contribute to the ATP site. One can recognise an ATP-grasp domain in the interval 123–320 (IAAMKAAGVP…IVKEQILIAA (198 aa)). Position 241 (Lys241) interacts with hydrogencarbonate. 2 residues coordinate ATP: Glu279 and Glu291. Mg(2+) is bound by residues Glu279, Glu291, and Asn293. Mn(2+) contacts are provided by Glu279, Glu291, and Asn293. The hydrogencarbonate site is built by Arg295, Val298, and Arg341. Residue Arg295 is part of the active site. Residue Arg341 coordinates biotin.

Acetyl-CoA carboxylase is a heterohexamer of biotin carboxyl carrier protein, biotin carboxylase and the two subunits of carboxyl transferase in a 2:2 complex. The cofactor is Mg(2+). It depends on Mn(2+) as a cofactor.

It carries out the reaction N(6)-biotinyl-L-lysyl-[protein] + hydrogencarbonate + ATP = N(6)-carboxybiotinyl-L-lysyl-[protein] + ADP + phosphate + H(+). It participates in lipid metabolism; malonyl-CoA biosynthesis; malonyl-CoA from acetyl-CoA: step 1/1. Its function is as follows. This protein is a component of the acetyl coenzyme A carboxylase complex; first, biotin carboxylase catalyzes the carboxylation of the carrier protein and then the transcarboxylase transfers the carboxyl group to form malonyl-CoA. The sequence is that of Biotin carboxylase (accC) from Allochromatium vinosum (strain ATCC 17899 / DSM 180 / NBRC 103801 / NCIMB 10441 / D) (Chromatium vinosum).